A 140-amino-acid chain; its full sequence is ATP synthase epsilon chain (140 aa).

This sequence belongs to the ATPase epsilon chain family. F-type ATPases have 2 components, CF(1) - the catalytic core - and CF(0) - the membrane proton channel. CF(1) has five subunits: alpha(3), beta(3), gamma(1), delta(1), epsilon(1). CF(0) has three main subunits: a, b and c.

The protein resides in the cell membrane. In terms of biological role, produces ATP from ADP in the presence of a proton gradient across the membrane. The chain is ATP synthase epsilon chain (atpC) from Enterococcus hirae (strain ATCC 9790 / DSM 20160 / JCM 8729 / LMG 6399 / NBRC 3181 / NCIMB 6459 / NCDO 1258 / NCTC 12367 / WDCM 00089 / R).